The sequence spans 1519 residues: DNA (cytosine-5)-methyltransferase 4 (1519 aa).

The segment covering 1 to 24 (MEMETKAGKQKKRSVDSDDDVSKE) has biased composition (basic and acidic residues). Positions 1 to 31 (MEMETKAGKQKKRSVDSDDDVSKERRPKRAA) are disordered. Residue K583 forms a Glycyl lysine isopeptide (Lys-Gly) (interchain with G-Cter in ubiquitin) linkage. The disordered stretch occupies residues 641-668 (ENVEEEELEEVEEEDENEEDDPEENELE). Acidic residues predominate over residues 642 to 668 (NVEEEELEEVEEEDENEEDDPEENELE). BAH domains follow at residues 715-849 (DVVV…FSLP) and 916-1033 (TTLK…KQFP). One can recognise an SAM-dependent MTase C5-type domain in the interval 1078–1512 (LATLDIFAGC…RKLKEALYLK (435 aa)). Residue C1183 is part of the active site.

It belongs to the class I-like SAM-binding methyltransferase superfamily. C5-methyltransferase family. As to expression, expressed at low levels in vegetative and floral organs.

The protein resides in the nucleus. The catalysed reaction is a 2'-deoxycytidine in DNA + S-adenosyl-L-methionine = a 5-methyl-2'-deoxycytidine in DNA + S-adenosyl-L-homocysteine + H(+). Maintains chromatin CpG methylation that plays a role in genomic imprinting, regulation of embryogenesis and seed viability. Required for proper patterns of CG DNA methylation in dividing cells. In Arabidopsis thaliana (Mouse-ear cress), this protein is DNA (cytosine-5)-methyltransferase 4 (MET4).